The following is a 718-amino-acid chain: Protein Smaug homolog 1 (718 aa).

Serine 168 is modified (phosphoserine). Disordered stretches follow at residues 278–323 (ARGP…EEGS), 416–474 (KAYS…LQPH), and 572–601 (NRGF…QYQI). The region spanning 323–391 (SGMKDVPAWL…ERQNLLKSLE (69 aa)) is the SAM domain. Position 420 is a phosphoserine (serine 420). The residue at position 424 (threonine 424) is a Phosphothreonine. A compositionally biased stretch (low complexity) spans 453–466 (GAAATGATATPSAG). Arginine 573 carries the omega-N-methylarginine modification. Serine 580 carries the phosphoserine modification.

The protein belongs to the SMAUG family.

It is found in the cytoplasm. Its subcellular location is the cell projection. It localises to the dendrite. The protein resides in the synapse. The protein localises to the synaptosome. Functionally, acts as a translational repressor of SRE-containing messengers. This chain is Protein Smaug homolog 1 (SAMD4A), found in Homo sapiens (Human).